A 244-amino-acid chain; its full sequence is Phosphoadenosine 5'-phosphosulfate reductase (244 aa).

The Nucleophile; cysteine thiosulfonate intermediate role is filled by C239.

It belongs to the PAPS reductase family. CysH subfamily.

Its subcellular location is the cytoplasm. It catalyses the reaction [thioredoxin]-disulfide + sulfite + adenosine 3',5'-bisphosphate + 2 H(+) = [thioredoxin]-dithiol + 3'-phosphoadenylyl sulfate. Its pathway is sulfur metabolism; hydrogen sulfide biosynthesis; sulfite from sulfate: step 3/3. Catalyzes the formation of sulfite from phosphoadenosine 5'-phosphosulfate (PAPS) using thioredoxin as an electron donor. The polypeptide is Phosphoadenosine 5'-phosphosulfate reductase (Escherichia coli O81 (strain ED1a)).